Here is a 474-residue protein sequence, read N- to C-terminus: Probable glycine dehydrogenase (decarboxylating) subunit 2 (474 aa).

N6-(pyridoxal phosphate)lysine is present on Lys-266.

The protein belongs to the GcvP family. C-terminal subunit subfamily. In terms of assembly, the glycine cleavage system is composed of four proteins: P, T, L and H. In this organism, the P 'protein' is a heterodimer of two subunits. Pyridoxal 5'-phosphate is required as a cofactor.

The enzyme catalyses N(6)-[(R)-lipoyl]-L-lysyl-[glycine-cleavage complex H protein] + glycine + H(+) = N(6)-[(R)-S(8)-aminomethyldihydrolipoyl]-L-lysyl-[glycine-cleavage complex H protein] + CO2. Its function is as follows. The glycine cleavage system catalyzes the degradation of glycine. The P protein binds the alpha-amino group of glycine through its pyridoxal phosphate cofactor; CO(2) is released and the remaining methylamine moiety is then transferred to the lipoamide cofactor of the H protein. The polypeptide is Probable glycine dehydrogenase (decarboxylating) subunit 2 (Thermus thermophilus (strain ATCC 27634 / DSM 579 / HB8)).